Reading from the N-terminus, the 810-residue chain is Transmembrane GTPase Marf (810 aa).

Residues 1 to 637 lie on the Cytoplasmic side of the membrane; the sequence is MAAYLNRTIS…TTTPVEATPV (637 aa). Position 8 is a phosphothreonine (Thr-8). The interval 13–40 is disordered; it reads TGQTGPADDDRHASSTDTVDKSGPGSPL. The span at 20–32 shows a compositional bias: basic and acidic residues; the sequence is DDDRHASSTDTVD. Ser-38 is modified (phosphoserine). In terms of domain architecture, Dynamin-type G spans 134–382; that stretch reads QRDHMKVAFF…IRYFEFQDFE (249 aa). The G1 motif stretch occupies residues 144–151; sequence GRTSNGKS. 147–152 serves as a coordination point for GTP; the sequence is SNGKSS. Residues 170 to 171 are G2 motif; the sequence is TT. Positions 239–242 are G3 motif; that stretch reads DSPG. 298 to 301 provides a ligand contact to GTP; the sequence is NRWD. Residues 298–301 form a G4 motif region; sequence NRWD. Position 327 (Lys-327) is a region of interest, G5 motif. Ser-345 is a binding site for GTP. Positions 427–476 form a coiled coil; the sequence is RNLKQDQKNLLTERIQGTETQMMQVTREMKMKIHNMVEEVEEKVSKALNE. Phosphothreonine is present on Thr-553. Ser-554 bears the Phosphoserine mark. Thr-555 bears the Phosphothreonine mark. A disordered region spans residues 609–630; it reads GQPALVNRQSSIGHSVSTPTTT. The helical transmembrane segment at 638 to 648 threads the bilayer; the sequence is CLLPAPVVAGI. The Mitochondrial intermembrane segment spans residues 649 to 668; the sequence is TPEQLSLISRFAVSSIGSQG. A helical transmembrane segment spans residues 669 to 689; sequence TVGGLVVAGVMLKTIGWRVLV. Topologically, residues 690–810 are cytoplasmic; that stretch reads GVGALYGCIY…IFEHNYISPQ (121 aa). Residues 759–806 adopt a coiled-coil conformation; the sequence is TATTDMNDELKTLDSQLNILEANQKQLKLLRNKANYIQNELDIFEHNY.

It belongs to the TRAFAC class dynamin-like GTPase superfamily. Dynamin/Fzo/YdjA family. Mitofusin subfamily. As to quaternary structure, interacts with Mul1. Ubiquitinated by park and Mul1. Ubiquitinated, probably by HUWE1, when dietary stearate (C18:0) levels are low; ubiquitination inhibits mitochondrial fusion. As to expression, widely expressed in embryos, accumulating in the mesoderm and endoderm during gut development. In the male germ line, it is expressed in spermatogonia, spermatocytes and early spermatids.

The protein localises to the mitochondrion outer membrane. It catalyses the reaction GTP + H2O = GDP + phosphate + H(+). In terms of biological role, mitochondrial outer membrane GTPase that mediates mitochondrial clustering and fusion. Mitochondrial fusion is the physical merging of mitochondria that gives rise to mitochondrial networks, and this process is counterbalanced by mitochondrial fission which fragments networks. Promotes, but is not required for park recruitment to dysfunctional mitochondria. The protein is Transmembrane GTPase Marf (Marf) of Drosophila melanogaster (Fruit fly).